We begin with the raw amino-acid sequence, 974 residues long: Localization factor PodJL (974 aa).

3 coiled-coil regions span residues 81 to 163 (DEVG…EAAG), 218 to 320 (VARL…SAQA), and 375 to 469 (QAQA…LEAA). 2 disordered regions span residues 460 to 497 (SEAQ…SPFE) and 589 to 611 (AAAR…KKEK). Residues 589-598 (AAARAAAASE) are compositionally biased toward low complexity. Residues 642-662 (ALVVFAAAGALGAGVGGLLLL) traverse the membrane as a helical segment. 3 Sel1-like repeats span residues 757–793 (PAAQ…NGGD), 794–829 (PRAM…DMGL), and 830–865 (VDSQ…RAGD).

Two isoforms exist, the full-length translation product PodJL and a C-terminal truncated form PodJS. Both appear during a specific time period of the cell cycle to control different aspects of polar organelle development.

It is found in the membrane. Its function is as follows. PodJL provides the positional information for the localization of several polar organelles (pili, adhesive holdfast and chemotactic apparatus) by recruiting structural (CpaE) and regulatory (PleC) proteins to a specific cell pole. The protein is Localization factor PodJL (podJ) of Caulobacter vibrioides (strain ATCC 19089 / CIP 103742 / CB 15) (Caulobacter crescentus).